The sequence spans 337 residues: tRNA N6-adenosine threonylcarbamoyltransferase (337 aa).

His111 and His115 together coordinate Fe cation. Substrate is bound by residues 134–138 (LVSGG), Asp167, Gly180, and Asn272. Position 300 (Asp300) interacts with Fe cation.

Belongs to the KAE1 / TsaD family. Fe(2+) serves as cofactor.

Its subcellular location is the cytoplasm. It carries out the reaction L-threonylcarbamoyladenylate + adenosine(37) in tRNA = N(6)-L-threonylcarbamoyladenosine(37) in tRNA + AMP + H(+). Functionally, required for the formation of a threonylcarbamoyl group on adenosine at position 37 (t(6)A37) in tRNAs that read codons beginning with adenine. Is involved in the transfer of the threonylcarbamoyl moiety of threonylcarbamoyl-AMP (TC-AMP) to the N6 group of A37, together with TsaE and TsaB. TsaD likely plays a direct catalytic role in this reaction. The sequence is that of tRNA N6-adenosine threonylcarbamoyltransferase from Salmonella typhi.